Reading from the N-terminus, the 196-residue chain is Large ribosomal subunit protein uL6 (196 aa).

Belongs to the universal ribosomal protein uL6 family. Part of the 50S ribosomal subunit.

Its function is as follows. This protein binds to the 23S rRNA, and is important in its secondary structure. It is located near the subunit interface in the base of the L7/L12 stalk, and near the tRNA binding site of the peptidyltransferase center. The protein is Large ribosomal subunit protein uL6 of Archaeoglobus fulgidus (strain ATCC 49558 / DSM 4304 / JCM 9628 / NBRC 100126 / VC-16).